We begin with the raw amino-acid sequence, 671 residues long: DNA ligase (671 aa).

NAD(+) contacts are provided by residues 32–36, 81–82, and Glu113; these read DAEYD and SL. Lys115 serves as the catalytic N6-AMP-lysine intermediate. 4 residues coordinate NAD(+): Arg136, Glu173, Lys290, and Lys314. Positions 408, 411, 426, and 432 each coordinate Zn(2+). Residues 593-671 form the BRCT domain; that stretch reads EIDSPFAGKT…ETEMLRLLGS (79 aa).

This sequence belongs to the NAD-dependent DNA ligase family. LigA subfamily. Mg(2+) serves as cofactor. The cofactor is Mn(2+).

The enzyme catalyses NAD(+) + (deoxyribonucleotide)n-3'-hydroxyl + 5'-phospho-(deoxyribonucleotide)m = (deoxyribonucleotide)n+m + AMP + beta-nicotinamide D-nucleotide.. DNA ligase that catalyzes the formation of phosphodiester linkages between 5'-phosphoryl and 3'-hydroxyl groups in double-stranded DNA using NAD as a coenzyme and as the energy source for the reaction. It is essential for DNA replication and repair of damaged DNA. The sequence is that of DNA ligase from Escherichia coli O1:K1 / APEC.